The chain runs to 295 residues: Pyridoxal 5'-phosphate synthase subunit PdxS (295 aa).

Residue aspartate 25 coordinates D-ribose 5-phosphate. Residue lysine 82 is the Schiff-base intermediate with D-ribose 5-phosphate of the active site. Residue glycine 154 participates in D-ribose 5-phosphate binding. Position 166 (arginine 166) interacts with D-glyceraldehyde 3-phosphate. D-ribose 5-phosphate is bound by residues glycine 215 and 236–237 (GS).

Belongs to the PdxS/SNZ family. As to quaternary structure, in the presence of PdxT, forms a dodecamer of heterodimers.

The enzyme catalyses aldehydo-D-ribose 5-phosphate + D-glyceraldehyde 3-phosphate + L-glutamine = pyridoxal 5'-phosphate + L-glutamate + phosphate + 3 H2O + H(+). Its pathway is cofactor biosynthesis; pyridoxal 5'-phosphate biosynthesis. Catalyzes the formation of pyridoxal 5'-phosphate from ribose 5-phosphate (RBP), glyceraldehyde 3-phosphate (G3P) and ammonia. The ammonia is provided by the PdxT subunit. Can also use ribulose 5-phosphate and dihydroxyacetone phosphate as substrates, resulting from enzyme-catalyzed isomerization of RBP and G3P, respectively. This Listeria monocytogenes serotype 4b (strain CLIP80459) protein is Pyridoxal 5'-phosphate synthase subunit PdxS.